The primary structure comprises 240 residues: Splicing factor U2AF 35 kDa subunit (240 aa).

Alanine 2 is modified (N-acetylalanine). The segment at glutamate 12–proline 40 adopts a C3H1-type 1 zinc-finger fold. Lysine 39 is modified (N6-methyllysine). Phosphoserine occurs at positions 61 and 145. Positions leucine 65–valine 147 constitute an RRM domain. The C3H1-type 2 zinc finger occupies aspartate 149–proline 176. Arginine 165 is modified (omega-N-methylarginine). The segment at arginine 183–phenylalanine 240 is disordered. Residues arginine 188–aspartate 208 are compositionally biased toward basic residues. Residues glycine 212–glycine 222 are compositionally biased toward gly residues. Positions glycine 223–phenylalanine 240 are enriched in basic and acidic residues.

It belongs to the splicing factor SR family. As to quaternary structure, identified in the spliceosome C complex. Heterodimer with U2AF2. Interacts (via RS domain) with PHF5A (via N-terminus). Interacts with ZRANB2. Interacts with SDE2. Interacts with SF3B1.

It is found in the nucleus. The protein resides in the nucleus speckle. Plays a critical role in both constitutive and enhancer-dependent splicing by mediating protein-protein interactions and protein-RNA interactions required for accurate 3'-splice site selection. Recruits U2 snRNP to the branch point. Directly mediates interactions between U2AF2 and proteins bound to the enhancers and thus may function as a bridge between U2AF2 and the enhancer complex to recruit it to the adjacent intron. In Homo sapiens (Human), this protein is Splicing factor U2AF 35 kDa subunit (U2AF1).